The primary structure comprises 347 residues: Heme A synthase (347 aa).

Helical transmembrane passes span 14 to 34 (VKIWLCICCIGILIMVFIGGI), 96 to 116 (FHRLLGRIVGLVFLIPFLYFM), 129 to 149 (FILIAFLILVQGVMGWYMVKS), 162 to 182 (LAMHLLLALAIFYLLWKHFLL), 199 to 219 (VFYIIISLITIQITCGALVAG), 260 to 280 (FIHEVIALLILIIAVITLLVL), 287 to 307 (MYLLLALLLIQLTLGILTFIY), and 311 to 331 (IILASLHQVTAFILFASSIYL). Heme is bound at residue His-262. His-317 provides a ligand contact to heme.

The protein belongs to the COX15/CtaA family. Type 2 subfamily. As to quaternary structure, interacts with CtaB. Requires heme b as cofactor.

It localises to the cell membrane. The catalysed reaction is Fe(II)-heme o + 2 A + H2O = Fe(II)-heme a + 2 AH2. It functions in the pathway porphyrin-containing compound metabolism; heme A biosynthesis; heme A from heme O: step 1/1. Its function is as follows. Catalyzes the conversion of heme O to heme A by two successive hydroxylations of the methyl group at C8. The first hydroxylation forms heme I, the second hydroxylation results in an unstable dihydroxymethyl group, which spontaneously dehydrates, resulting in the formyl group of heme A. This chain is Heme A synthase, found in Ehrlichia ruminantium (strain Gardel).